We begin with the raw amino-acid sequence, 196 residues long: Molybdopterin synthase catalytic subunit (196 aa).

Substrate is bound by residues 110–111 (HR), Lys126, and 133–135 (KKE). Positions 142-196 (GGIWRANRDGAVGERVDEDEEKKKPDMGPHGPILRPSRPGERGHGPVVRNHQLGS) are disordered. Residues 147-168 (ANRDGAVGERVDEDEEKKKPDM) are compositionally biased toward basic and acidic residues.

The protein belongs to the MoaE family. MOCS2B subfamily. In terms of assembly, heterotetramer; composed of 2 small (MOCS2A) and 2 large (MOCS2B) subunits.

It is found in the cytoplasm. It carries out the reaction 2 [molybdopterin-synthase sulfur-carrier protein]-C-terminal-Gly-aminoethanethioate + cyclic pyranopterin phosphate + H2O = molybdopterin + 2 [molybdopterin-synthase sulfur-carrier protein]-C-terminal Gly-Gly + 2 H(+). It participates in cofactor biosynthesis; molybdopterin biosynthesis. Catalytic subunit of the molybdopterin synthase complex, a complex that catalyzes the conversion of precursor Z into molybdopterin. Acts by mediating the incorporation of 2 sulfur atoms from thiocarboxylated MOCS2A into precursor Z to generate a dithiolene group. This Sclerotinia sclerotiorum (strain ATCC 18683 / 1980 / Ss-1) (White mold) protein is Molybdopterin synthase catalytic subunit.